Reading from the N-terminus, the 443-residue chain is ATP-dependent protease ATPase subunit HslU (443 aa).

Residues isoleucine 20, 62–67 (GVGKTE), aspartate 255, glutamate 321, and arginine 393 each bind ATP.

It belongs to the ClpX chaperone family. HslU subfamily. A double ring-shaped homohexamer of HslV is capped on each side by a ring-shaped HslU homohexamer. The assembly of the HslU/HslV complex is dependent on binding of ATP.

The protein resides in the cytoplasm. In terms of biological role, ATPase subunit of a proteasome-like degradation complex; this subunit has chaperone activity. The binding of ATP and its subsequent hydrolysis by HslU are essential for unfolding of protein substrates subsequently hydrolyzed by HslV. HslU recognizes the N-terminal part of its protein substrates and unfolds these before they are guided to HslV for hydrolysis. The chain is ATP-dependent protease ATPase subunit HslU from Helicobacter pylori (strain G27).